Here is a 318-residue protein sequence, read N- to C-terminus: Olfactory receptor-like protein COR3 (318 aa).

Residues Met1 to Pro26 are Extracellular-facing. Residue Asn5 is glycosylated (N-linked (GlcNAc...) asparagine). The helical transmembrane segment at Leu27 to Ile49 threads the bilayer. Over Ser50–Thr57 the chain is Cytoplasmic. The chain crosses the membrane as a helical span at residues Pro58 to Pro79. At Lys80–Gln100 the chain is on the extracellular side. A disulfide bridge links Cys97 with Cys179. Residues Tyr101–Tyr120 form a helical membrane-spanning segment. Residues Asp121–Ala139 lie on the Cytoplasmic side of the membrane. The chain crosses the membrane as a helical span at residues Val140–Leu164. Over Lys165 to Leu205 the chain is Extracellular. Residues Phe206 to Val226 traverse the membrane as a helical segment. Residues Met227 to Ser239 are Cytoplasmic-facing. A helical transmembrane segment spans residues Thr240–Leu260. Topologically, residues Arg261–Asp271 are extracellular. Residues Lys272–Trp292 traverse the membrane as a helical segment. The Cytoplasmic portion of the chain corresponds to Arg293–Gln318.

Belongs to the G-protein coupled receptor 1 family.

It is found in the cell membrane. Its function is as follows. Odorant receptor. The sequence is that of Olfactory receptor-like protein COR3 (COR3) from Gallus gallus (Chicken).